Here is a 218-residue protein sequence, read N- to C-terminus: Tegument protein UL51 homolog (218 aa).

Cysteine 11 is lipidated: S-palmitoyl cysteine; by host. Positions 199 to 218 (APPPVVRQPEHSGPTELALT) are disordered.

Belongs to the herpesviridae UL51 family. As to quaternary structure, homodimer. Interacts with BBRF2; the BBRF2-BSRF1 complexes oligomerize which might play a role in tethering the viral nucleocapsids to the host Golgi membrane during secondary envelopment. Interacts with BGLF3.5. Interacts with BALF1. Interacts with glycoprotein gB. Interacts with glycoprotein heterodimer gH/gL. In terms of processing, phosphorylated. Post-translationally, palmitoylation is necessary for Golgi localization.

It is found in the host cytoplasm. The protein resides in the virion. The protein localises to the host Golgi apparatus. Functionally, plays several roles during the time course of infection, including egress of virus particles from the perinuclear space and secondary envelopment of cytoplasmic capsids that bud into specific trans-Golgi network (TGN)-derived membranes. In Homo sapiens (Human), this protein is Tegument protein UL51 homolog.